The chain runs to 721 residues: bZIP transcription factor 17 (721 aa).

Disordered regions lie at residues 1–51 (MAEP…LMSD) and 87–232 (QEQF…EKKR). Topologically, residues 1 to 366 (MAEPITKEQP…KSEAKTKKVA (366 aa)) are cytoplasmic. Positions 9–25 (QPPPPAPDPNSTYPPPS) are enriched in pro residues. Positions 125–141 (ESPRDSDDRCSGADHNL) are enriched in basic and acidic residues. A compositionally biased stretch (polar residues) spans 146–170 (PLSSQGSGNCGSDVSEATNESSPKS). A compositionally biased stretch (basic and acidic residues) spans 204–216 (DESRNSKYRRSGE). The region spanning 228 to 288 (DEKKRARLMR…AENATLRQQL (61 aa)) is the bZIP domain. The tract at residues 230-261 (KKRARLMRNRESAQLSRQRKKHYVEELEEKVR) is basic motif. Residues 267-274 (ITDLNGKI) form a leucine-zipper region. A disordered region spans residues 337-359 (PRLKPQNTLGTSKAKKSESKKSE). The helical transmembrane segment at 367 to 387 (SISFLGLLFCLFLFGALAPIV) threads the bilayer. Over 388 to 721 (NVNYGGISGA…RSGAPHLVTT (334 aa)) the chain is Lumenal. A compositionally biased stretch (polar residues) spans 422–436 (TSRSGAGTGVSNSNG). The tract at residues 422 to 462 (TSRSGAGTGVSNSNGMHRGRDSDRGARKNISATESSVTPGN) is disordered. N-linked (GlcNAc...) asparagine glycans are attached at residues Asn450, Asn462, Asn609, and Asn617. Polar residues predominate over residues 451 to 462 (ISATESSVTPGN). Residues 627–630 (RRIL) carry the RRIL cleavage motif motif. N-linked (GlcNAc...) asparagine glycosylation is found at Asn643 and Asn651.

It belongs to the bZIP family. In terms of assembly, interacts with BZIP28.

It is found in the endoplasmic reticulum membrane. It localises to the golgi apparatus membrane. The protein localises to the nucleus. Transcriptional activator involved in salt and osmotic stress responses. Functions as a stress sensor and transducer in a signaling pathway that resembles an ER stress response. Following salt stress, BZIP17 is cleaved by SBT6.1 (S1P) and S2P at the C-terminus and the N-terminal bZIP component is translocated to the nucleus, where it activates the expression of salt stress response genes. Functions as a stress sensor and transducer in ER stress signaling pathway. ER stress induces proteolysis of BZIP17 by SBT6.1 (S1P) and S2P, and the N-terminal bZIP component is translocated to the nucleus, where it activates the expression and production of ER chaperones, as well as protein involved in brassinosteroid (BR) signaling, which is required for stress acclimation and growth. This chain is bZIP transcription factor 17, found in Arabidopsis thaliana (Mouse-ear cress).